We begin with the raw amino-acid sequence, 65 residues long: Large ribosomal subunit protein uL29 (65 aa).

Belongs to the universal ribosomal protein uL29 family.

In Acinetobacter baylyi (strain ATCC 33305 / BD413 / ADP1), this protein is Large ribosomal subunit protein uL29.